The sequence spans 859 residues: Cleavage factor two protein 2 (859 aa).

A disordered region spans residues 560–611; the sequence is PDDSDNVNQNSRKRPLKDGAKTTSPVNEEDNKNEEEDGYNMSDPISKRSKHR. Positions 586–597 are enriched in acidic residues; sequence NEEDNKNEEEDG.

As to quaternary structure, component of the cleavage and polyadenylation factor (CPF) complex, which is composed of at least PTI1, SYC1, SSU72, GLC7, MPE1, REF2, PFS2, PTA1, YSH1/BRR5, SWD2, CFT2/YDH1, YTH1, CFT1/YHH1, FIP1 and PAP1. Interacts with the CTD domain of RPB1/RNA polymerase II; the interaction is enhanced upon phosphorylation of the RPB1 CTD domain. Interacts with PCF11.

The protein resides in the nucleus. Its function is as follows. RNA-binding component of the cleavage and polyadenylation factor (CPF) complex, which plays a key role in polyadenylation-dependent pre-mRNA 3'-end formation and cooperates with cleavage factors including the CFIA complex and NAB4/CFIB. May be involved in poly(A)-site recognition. May be involved in the association of the CPF, CPFIA and RNA polymerase II complexes. This chain is Cleavage factor two protein 2 (CFT2), found in Saccharomyces cerevisiae (strain ATCC 204508 / S288c) (Baker's yeast).